Consider the following 85-residue polypeptide: Homeobox protein knotted-1-like 5 (85 aa).

The ELK domain occupies 1–21; it reads ELKEMLLKKYSGCLSRLRSEF. The segment at residues 22-85 is a DNA-binding region (homeobox; TALE-type); sequence LKKRKKGKLP…NQRKRHWKPS (64 aa).

The protein belongs to the TALE/KNOX homeobox family. As to expression, strongly expressed in ear inflorescence primordia and shoot meristem. Weakly expressed in embryos. Absent from leaves.

It is found in the nucleus. Functionally, probably binds to the DNA sequence 5'-TGAC-3'. The chain is Homeobox protein knotted-1-like 5 (KNOX5) from Zea mays (Maize).